The chain runs to 85 residues: Large ribosomal subunit protein bL27 (85 aa).

The interval methionine 1 to arginine 20 is disordered.

Belongs to the bacterial ribosomal protein bL27 family.

The polypeptide is Large ribosomal subunit protein bL27 (Citrobacter koseri (strain ATCC BAA-895 / CDC 4225-83 / SGSC4696)).